The sequence spans 113 residues: UPF0102 protein Ccon26_01140 (113 aa).

The protein belongs to the UPF0102 family.

The protein is UPF0102 protein Ccon26_01140 of Campylobacter concisus (strain 13826).